The primary structure comprises 265 residues: MLDLHQVIVSIIIGVIEGITEFLPISSTGHMIIASHWLKIDNENTKILEIFIEFGSALSILYFFHKKILRILKFNINVKKTNTKNLHILLAILPTIFFGLLFYKKIKLLFNTYNVMYALILGGIFLLISEIFKPKKYKTCSINDISLLQSAIIGFFQIFCLYPGFSRSGATIGTAILLGIKRSVAIEFSFIISIPLIMGASFYDFINNMHNFKILDLPIFFIGFMISFIVSILCIKKLLKIINRTSLIFFGIYRFIISGLIYFIN.

Helical transmembrane passes span 7 to 27 (VIVSIIIGVIEGITEFLPISS), 45 to 65 (TKILEIFIEFGSALSILYFFH), 86 to 106 (LHILLAILPTIFFGLLFYKKI), 108 to 128 (LLFNTYNVMYALILGGIFLLI), 145 to 165 (ISLLQSAIIGFFQIFCLYPGF), 186 to 206 (IEFSFIISIPLIMGASFYDFI), 214 to 234 (ILDLPIFFIGFMISFIVSILC), and 245 to 265 (TSLIFFGIYRFIISGLIYFIN).

This sequence belongs to the UppP family.

It localises to the cell membrane. The catalysed reaction is di-trans,octa-cis-undecaprenyl diphosphate + H2O = di-trans,octa-cis-undecaprenyl phosphate + phosphate + H(+). In terms of biological role, catalyzes the dephosphorylation of undecaprenyl diphosphate (UPP). Confers resistance to bacitracin. This is Undecaprenyl-diphosphatase from Buchnera aphidicola subsp. Acyrthosiphon pisum (strain 5A).